Consider the following 482-residue polypeptide: Nucleoside triphosphate pyrophosphatase/Nudix hydrolase fusion protein (482 aa).

Residues 1-299 form a maf-like region; that stretch reads MSIPLILASK…DLWNVGRGEL (299 aa). Asp167 serves as the catalytic Proton acceptor. Residues 338 to 475 enclose the Nudix hydrolase domain; it reads GTNGASGILL…TDWPRFAARL (138 aa).

In the N-terminal section; belongs to the Maf family. The cofactor is a divalent metal cation.

The protein resides in the cytoplasm. The catalysed reaction is a ribonucleoside 5'-triphosphate + H2O = a ribonucleoside 5'-phosphate + diphosphate + H(+). It catalyses the reaction a 2'-deoxyribonucleoside 5'-triphosphate + H2O = a 2'-deoxyribonucleoside 5'-phosphate + diphosphate + H(+). Functionally, nucleoside triphosphate pyrophosphatase. May have a dual role in cell division arrest and in preventing the incorporation of modified nucleotides into cellular nucleic acids. This chain is Nucleoside triphosphate pyrophosphatase/Nudix hydrolase fusion protein, found in Bifidobacterium longum (strain NCC 2705).